A 285-amino-acid chain; its full sequence is Aquaporin PIP2-5 (285 aa).

2 helical membrane-spanning segments follow: residues 38 to 58 (AVIA…ATVI) and 75 to 95 (CGGV…FILV). The NPA 1 signature appears at 107-109 (NPA). 3 helical membrane passes run 126–146 (LLYI…VKGF), 168–188 (GTGL…VFSA), and 202–222 (VLAP…TIPI). Positions 228-230 (NPA) match the NPA 2 motif. Residues 250–270 (IFWVGPFIGAAIAAAYHQYVL) form a helical membrane-spanning segment.

It belongs to the MIP/aquaporin (TC 1.A.8) family. PIP (TC 1.A.8.11) subfamily. In terms of assembly, homomers. May interact with PIP1-2 to form heteromers. In terms of tissue distribution, specifically expressed in roots, in the exodermis, endodermis and xylem parenchyma. Polar localization to the external periclinal side of epidermal cells in root apices.

The protein localises to the cell membrane. In terms of biological role, water channel required to facilitate the transport of water across cell membrane. Its function is impaired by Hg(2+). May play a role in water uptake from the root surface. Active as homomers. Increased activity when heteromerization with PIP1-2. This is Aquaporin PIP2-5 (PIP2-5) from Zea mays (Maize).